Consider the following 396-residue polypeptide: Elongation factor Tu (396 aa).

The 197-residue stretch at lysine 10–lysine 206 folds into the tr-type G domain. The segment at glycine 19 to threonine 26 is G1. Glycine 19–threonine 26 is a GTP binding site. Threonine 26 provides a ligand contact to Mg(2+). A G2 region spans residues glycine 60 to serine 64. The interval aspartate 81–glycine 84 is G3. GTP contacts are provided by residues aspartate 81 to histidine 85 and asparagine 136 to aspartate 139. The G4 stretch occupies residues asparagine 136 to aspartate 139. A G5 region spans residues serine 174–leucine 176.

It belongs to the TRAFAC class translation factor GTPase superfamily. Classic translation factor GTPase family. EF-Tu/EF-1A subfamily. As to quaternary structure, monomer.

Its subcellular location is the cytoplasm. The enzyme catalyses GTP + H2O = GDP + phosphate + H(+). Its function is as follows. GTP hydrolase that promotes the GTP-dependent binding of aminoacyl-tRNA to the A-site of ribosomes during protein biosynthesis. In Dichelobacter nodosus (strain VCS1703A), this protein is Elongation factor Tu.